Reading from the N-terminus, the 294-residue chain is MEDSAMDMESMGPLRPQTFLFGCELKAEKEYQFKVDDEENEHQLSLRTVTLGAGAKDELHVVEAEALDYEGNPTKVVLASLKMSVQPTVSLGGFEITPPFVLRLKCGSGPVYVSGQHLVALEEEPESEDEEEDTKIGNASTKRPASGGGAKTPQKKPKLSEDDEDDDEDEDDDEDDEDDLDDDEEEIKTPMKKPAREPAGKNMQKAKQNGKDSKPSTPASKTKTPDSKKDKSLTPKTPKVPLSLEEIKAKMQASVDKGCSLPKLEPKFANYVKNCFRTEDQKVIQALWQWRQTL.

The segment covering 121-133 (LEEEPESEDEEED) has biased composition (acidic residues). The segment at 121–244 (LEEEPESEDE…PKTPKVPLSL (124 aa)) is disordered. A Nuclear localization signal motif is present at residues 153–158 (PQKKPK). The segment covering 161–186 (EDDEDDDEDEDDDEDDEDDLDDDEEE) has biased composition (acidic residues). A Nuclear localization signal motif is present at residues 190–196 (PMKKPAR). Over residues 223–233 (KTPDSKKDKSL) the composition is skewed to basic and acidic residues.

This sequence belongs to the nucleoplasmin family. Decamer formed by two pentameric rings associated in a head-to-head fashion. In terms of processing, phosphorylated.

The protein resides in the cytoplasm. Its subcellular location is the nucleus. The protein localises to the nucleoplasm. It localises to the nucleolus. Its function is as follows. Acts as a chaperonin for the core histones H3, H2B and H4. Associated with nucleolar ribonucleoprotein structures and bind single-stranded nucleic acids. It may function in the assembly and/or transport of ribosome. May stimulate endonuclease activity on apurinic/apyrimidinic (AP) double-stranded DNA. May inhibit endonuclease activity on AP single-stranded RNA. The chain is Nucleophosmin (NPM1) from Gallus gallus (Chicken).